The following is a 908-amino-acid chain: Translation initiation factor IF-2 (908 aa).

The disordered stretch occupies residues 52-318 (QSHGQEEKRR…RSSQSSQHKF (267 aa)). Residues 65 to 84 (KSKTTSTARVTGSSGKSKSV) are compositionally biased toward polar residues. Basic and acidic residues-rich tracts occupy residues 94–108 (FEKP…ELAA), 120–138 (AAKD…EERQ), 176–185 (IEVKPKDQPK), 193–238 (PKVE…EQMR), 270–280 (SFEKERREIKR), and 294–303 (KNQDEREIKN). In terms of domain architecture, tr-type G spans 409–578 (TRPPVVTIMG…SLQAELMELE (170 aa)). A G1 region spans residues 418-425 (GHVDHGKT). 418-425 (GHVDHGKT) contacts GTP. Residues 443–447 (GITQH) are G2. The tract at residues 464–467 (DTPG) is G3. GTP is bound by residues 464–468 (DTPGH) and 518–521 (NKMD). The interval 518–521 (NKMD) is G4. A G5 region spans residues 554-556 (SAK).

This sequence belongs to the TRAFAC class translation factor GTPase superfamily. Classic translation factor GTPase family. IF-2 subfamily.

The protein localises to the cytoplasm. One of the essential components for the initiation of protein synthesis. Protects formylmethionyl-tRNA from spontaneous hydrolysis and promotes its binding to the 30S ribosomal subunits. Also involved in the hydrolysis of GTP during the formation of the 70S ribosomal complex. This is Translation initiation factor IF-2 from Psychrobacter cryohalolentis (strain ATCC BAA-1226 / DSM 17306 / VKM B-2378 / K5).